The chain runs to 69 residues: Ferredoxin-1 (69 aa).

[3Fe-4S] cluster is bound by residues Cys12, Cys18, and Cys57.

It depends on [3Fe-4S] cluster as a cofactor.

Functionally, electron transport protein for the cytochrome P-450-SU1 system. The chain is Ferredoxin-1 (suaB) from Streptomyces griseolus.